We begin with the raw amino-acid sequence, 97 residues long: Mitochondrial import inner membrane translocase subunit Tim8 A (97 aa).

A Twin CX3C motif motif is present at residues 43 to 66 (CWEKCMDKPGPKLDSRAEACFVNC). 2 disulfides stabilise this stretch: Cys-43-Cys-66 and Cys-47-Cys-62. Ser-57, Ser-87, Ser-94, and Ser-96 each carry phosphoserine.

Belongs to the small Tim family. Heterohexamer; composed of 3 copies of TIMM8A and 3 copies of TIMM13, named soluble 70 kDa complex. Associates with the TIM22 complex, whose core is composed of TIMM22. Highly expressed in fetal and adult brain, followed by fetal lung, liver and kidney. Also expressed in heart, placenta, lung, liver, kidney, pancreas, skeletal muscle and heart.

Its subcellular location is the mitochondrion inner membrane. Functionally, mitochondrial intermembrane chaperone that participates in the import and insertion of some multi-pass transmembrane proteins into the mitochondrial inner membrane. Also required for the transfer of beta-barrel precursors from the TOM complex to the sorting and assembly machinery (SAM complex) of the outer membrane. Acts as a chaperone-like protein that protects the hydrophobic precursors from aggregation and guide them through the mitochondrial intermembrane space. The TIMM8-TIMM13 complex mediates the import of proteins such as TIMM23, SLC25A12/ARALAR1 and SLC25A13/ARALAR2, while the predominant TIMM9-TIMM10 70 kDa complex mediates the import of much more proteins. Probably necessary for normal neurologic development. The polypeptide is Mitochondrial import inner membrane translocase subunit Tim8 A (TIMM8A) (Homo sapiens (Human)).